The primary structure comprises 110 residues: Parvalbumin alpha (110 aa).

At serine 2 the chain carries N-acetylserine. Phosphoserine is present on residues serine 2, serine 8, and serine 24. 2 EF-hand domains span residues 39 to 74 (KSAD…FSSD) and 78 to 110 (LSAK…VAES). Ca(2+) contacts are provided by aspartate 52, aspartate 54, serine 56, phenylalanine 58, glutamate 60, and glutamate 63. Serine 66 carries the phosphoserine modification. Aspartate 91, aspartate 93, aspartate 95, lysine 97, and glutamate 102 together coordinate Ca(2+).

Functionally, in muscle, parvalbumin is thought to be involved in relaxation after contraction. It binds two calcium ions. The sequence is that of Parvalbumin alpha (Pvalb) from Rattus norvegicus (Rat).